Consider the following 640-residue polypeptide: 1-deoxy-D-xylulose-5-phosphate synthase (640 aa).

Thiamine diphosphate-binding positions include His-72 and 113 to 115; that span reads GHA. Asp-144 contributes to the Mg(2+) binding site. Thiamine diphosphate is bound by residues 145–146, Asn-174, Tyr-287, and Glu-370; that span reads GA. Mg(2+) is bound at residue Asn-174.

It belongs to the transketolase family. DXPS subfamily. As to quaternary structure, homodimer. Mg(2+) serves as cofactor. Requires thiamine diphosphate as cofactor.

The catalysed reaction is D-glyceraldehyde 3-phosphate + pyruvate + H(+) = 1-deoxy-D-xylulose 5-phosphate + CO2. It functions in the pathway metabolic intermediate biosynthesis; 1-deoxy-D-xylulose 5-phosphate biosynthesis; 1-deoxy-D-xylulose 5-phosphate from D-glyceraldehyde 3-phosphate and pyruvate: step 1/1. Functionally, catalyzes the acyloin condensation reaction between C atoms 2 and 3 of pyruvate and glyceraldehyde 3-phosphate to yield 1-deoxy-D-xylulose-5-phosphate (DXP). In Synechocystis sp. (strain ATCC 27184 / PCC 6803 / Kazusa), this protein is 1-deoxy-D-xylulose-5-phosphate synthase.